The sequence spans 379 residues: UDP-4-amino-4-deoxy-L-arabinose--oxoglutarate aminotransferase (379 aa).

At Lys-182 the chain carries N6-(pyridoxal phosphate)lysine.

This sequence belongs to the DegT/DnrJ/EryC1 family. ArnB subfamily. In terms of assembly, homodimer. The cofactor is pyridoxal 5'-phosphate.

The catalysed reaction is UDP-4-amino-4-deoxy-beta-L-arabinose + 2-oxoglutarate = UDP-beta-L-threo-pentopyranos-4-ulose + L-glutamate. Its pathway is nucleotide-sugar biosynthesis; UDP-4-deoxy-4-formamido-beta-L-arabinose biosynthesis; UDP-4-deoxy-4-formamido-beta-L-arabinose from UDP-alpha-D-glucuronate: step 2/3. The protein operates within bacterial outer membrane biogenesis; lipopolysaccharide biosynthesis. In terms of biological role, catalyzes the conversion of UDP-4-keto-arabinose (UDP-Ara4O) to UDP-4-amino-4-deoxy-L-arabinose (UDP-L-Ara4N). The modified arabinose is attached to lipid A and is required for resistance to polymyxin and cationic antimicrobial peptides. The chain is UDP-4-amino-4-deoxy-L-arabinose--oxoglutarate aminotransferase from Shigella flexneri.